Reading from the N-terminus, the 2144-residue chain is Insulin-like receptor (2144 aa).

Residues 1 to 43 (MFNMPRGVTKSKSKRGKIKMENDMAAAATTTACTLGHICVLCR) form the signal peptide. Asn74 carries N-linked (GlcNAc...) asparagine glycosylation. Residues 174–199 (RRQHQQQHHHHYQHHHQQHHQQHHQR) show a composition bias toward basic residues. A disordered region spans residues 174–200 (RRQHQQQHHHHYQHHHQQHHQQHHQRQ). Asn203 carries an N-linked (GlcNAc...) asparagine glycan. A disordered region spans residues 229 to 256 (NYKQQQQLQHNQQLPRATPQQKQQEKDR). Positions 232–242 (QQQQLQHNQQL) are enriched in low complexity. Asn265, Asn356, Asn376, Asn406, Asn468, and Asn509 each carry an N-linked (GlcNAc...) asparagine glycan. Disulfide bonds link Cys531–Cys539, Cys535–Cys545, Cys546–Cys554, Cys550–Cys564, Cys567–Cys576, Cys580–Cys591, Cys597–Cys618, and Cys635–Cys638. One copy of the FU repeat lies at 542–586 (EHTCCSQDCLGGCVIDKNGNESCISCRNVSFNNICMDSCPKGYYQ). N-linked (GlcNAc...) asparagine glycans are attached at residues Asn561 and Asn569. Residues Asn751, Asn810, Asn824, Asn839, Asn864, Asn898, Asn946, Asn1053, Asn1147, Asn1218, and Asn1265 are each glycosylated (N-linked (GlcNAc...) asparagine). 2 consecutive Fibronectin type-III domains span residues 825–927 (VTTK…TNPG) and 928–1026 (RPSK…EYDD). Residues 1053-1084 (NGSSDKSDGAEGAALDSNAIPNGGATNPSRRR) form a disordered region. The region spanning 1210–1305 (LKVDLEHANN…EVEHIKVEPP (96 aa)) is the Fibronectin type-III 3 domain. The helical transmembrane segment at 1311-1331 (VFFWLLGIGLAFLIVSLFGYV) threads the bilayer. Residues 1332–2144 (CYLHKRKVPS…PPNGFIGREA (813 aa)) lie on the Cytoplasmic side of the membrane. A chico-binding region spans residues 1351–1354 (NPFY). Tyr1354 bears the Phosphotyrosine; by autocatalysis mark. The Protein kinase domain occupies 1371 to 1659 (IIQLAPLGQG…LEPQCPNSQF (289 aa)). Residues 1377 to 1385 (LGQGSFGMV) and Lys1405 each bind ATP. Asp1519 acts as the Proton acceptor in catalysis. Residues Tyr1545, Tyr1549, and Tyr1550 each carry the phosphotyrosine; by autocatalysis modification. Disordered regions lie at residues 1690-1724 (VPLDQDLQDREQQEDATTPLRMGDYQQNSSLDQPP), 1788-1871 (RGYE…KKTV), 1886-1962 (LFNH…ISDN), and 2020-2144 (ISHN…GREA). Ser1816 carries the post-translational modification Phosphoserine. 2 stretches are compositionally biased toward low complexity: residues 1849-1860 (STASAGSSNASS) and 1894-1916 (SNASHKSNASNAPSTSSNTNLTS). Acidic residues predominate over residues 2042 to 2062 (SDEDNEQEEDDEDEDDDVDDE). Basic and acidic residues predominate over residues 2063–2073 (HVEHIKMERMP). Positions 2084-2120 (SKTQPPRSRSVSQTRKSPTNPNSGIGATGAGNRSNLL) are enriched in polar residues.

The protein belongs to the protein kinase superfamily. Tyr protein kinase family. Insulin receptor subfamily. In terms of assembly, tetramer of 2 alpha and 2 beta chains linked by disulfide bonds. The alpha chains contribute to the formation of the ligand-binding domain, while the beta chains carry the kinase domain. Interacts (via C-terminal cytoplasmic region) with dock/dreadlocks (via SH2 and SH3 domains); when autophosphorylated. May interact (via beta subunit) with chico/IRS-1; this interaction may lead to tyrosine phosphorylation of the insulin receptor substrate chico. Interacts with Elp6; the interaction may stabilize Elp6. Mn(2+) is required as a cofactor. In terms of processing, the 280 kDa proreceptor is proteolytically processed to form a 120 kDa alpha subunit and a 170 kDa beta subunit. The beta subunit undergoes cell-specific cleavage to generate a 90 kDa beta subunit and a free 60 kDa C-terminal subunit. Both the 90 kDa and the 170 kDa beta subunits can assemble with the alpha subunits to form mature receptors. Post-translationally, autophosphorylated on tyrosine residues, including Tyr-1549 and Tyr-1550, in response to exogenous insulin. Tyr-1549 and Tyr-1550 are dephosphorylated by Ptp61F recruited by the dock/dreadlocks adapter protein. Phosphorylation of Tyr-1354 is required for Chico-binding.

The protein localises to the membrane. The protein resides in the cell projection. It localises to the axon. It is found in the growth cone membrane. The enzyme catalyses L-tyrosyl-[protein] + ATP = O-phospho-L-tyrosyl-[protein] + ADP + H(+). Its activity is regulated as follows. Activated in response to insulin. Autophosphorylation activates the kinase activity. In terms of biological role, has a ligand-stimulated tyrosine-protein kinase activity. Binds 3 insulin-like peptide ligands. Regulates cell number and cell size during development by regulating cell growth and survival, affecting body size and organ size, including ovaries and imaginal disks. Plays a role in life-span determination. May be involved in regulation of other neuroendocrine signaling pathways. Involved in the development of the embryonic nervous system. Functions upstream of dock/dreadlocks for photoreceptor (R cell) axon guidance and targeting in the visual system. Involved in the acs mediated recovery of gut enterocytes following the cytoplasmic purge response to intestinal bacterial infection. The chain is Insulin-like receptor from Drosophila melanogaster (Fruit fly).